A 168-amino-acid polypeptide reads, in one-letter code: GTP-dependent dephospho-CoA kinase (168 aa).

GTP is bound by residues Asp49, Ile50, Val51, Asp68, Lys70, and Glu120.

Belongs to the GTP-dependent DPCK family.

The enzyme catalyses 3'-dephospho-CoA + GTP = GDP + CoA + H(+). It functions in the pathway cofactor biosynthesis; coenzyme A biosynthesis. Functionally, catalyzes the GTP-dependent phosphorylation of the 3'-hydroxyl group of dephosphocoenzyme A to form coenzyme A (CoA). The chain is GTP-dependent dephospho-CoA kinase from Pyrobaculum islandicum (strain DSM 4184 / JCM 9189 / GEO3).